Reading from the N-terminus, the 310-residue chain is L-lactate dehydrogenase (310 aa).

NAD(+)-binding positions include V11, D32, Y62, and 76 to 77 (GV). Residues Q79, R85, and 117 to 120 (NPVD) contribute to the substrate site. NAD(+) contacts are provided by residues 115–117 (ATN) and S140. Residue 145–148 (DTAR) participates in substrate binding. Positions 150 and 165 each coordinate beta-D-fructose 1,6-bisphosphate. H172 (proton acceptor) is an active-site residue. A Phosphotyrosine modification is found at Y218. T227 serves as a coordination point for substrate.

Belongs to the LDH/MDH superfamily. LDH family. Homotetramer.

Its subcellular location is the cytoplasm. It carries out the reaction (S)-lactate + NAD(+) = pyruvate + NADH + H(+). Its pathway is fermentation; pyruvate fermentation to lactate; (S)-lactate from pyruvate: step 1/1. With respect to regulation, allosterically activated by fructose 1,6-bisphosphate (FBP). In terms of biological role, catalyzes the conversion of lactate to pyruvate. In Thermus thermophilus (strain ATCC BAA-163 / DSM 7039 / HB27), this protein is L-lactate dehydrogenase.